A 323-amino-acid chain; its full sequence is Beta-ketoacyl-[acyl-carrier-protein] synthase III (323 aa).

Active-site residues include Cys-113 and His-250. Residues Gln-251–Arg-255 form an ACP-binding region. The active site involves Asn-280.

It belongs to the thiolase-like superfamily. FabH family. In terms of assembly, homodimer.

The protein localises to the cytoplasm. The catalysed reaction is malonyl-[ACP] + acetyl-CoA + H(+) = 3-oxobutanoyl-[ACP] + CO2 + CoA. It functions in the pathway lipid metabolism; fatty acid biosynthesis. Functionally, catalyzes the condensation reaction of fatty acid synthesis by the addition to an acyl acceptor of two carbons from malonyl-ACP. Catalyzes the first condensation reaction which initiates fatty acid synthesis and may therefore play a role in governing the total rate of fatty acid production. Possesses both acetoacetyl-ACP synthase and acetyl transacylase activities. Its substrate specificity determines the biosynthesis of branched-chain and/or straight-chain of fatty acids. This chain is Beta-ketoacyl-[acyl-carrier-protein] synthase III, found in Paracoccus denitrificans (strain Pd 1222).